The chain runs to 270 residues: MPELPEVETTRRGIAPYLEGQRVERVIVRERRLRWPIPEDLDVRLSGQRIVSVERRAKYLLLGAEAGTLISHLGMSGSLRLVESGTPASRHEHVDIELASGMALRYTDPRRFGAMLWSLAPLEHELLRNLGPEPLTDAFAGQRLFELSRGRSMAVKPFIMDNAVVVGVGNIYASEALFAAGIDPRKPAGSISKARYLRLAEEIKRILAIAIERGGTTLRDFVGGDGQPGYFQQELFVYGRGGEFCKVCGSTLREIRLGQRASVYCPRCQR.

The active-site Schiff-base intermediate with DNA is Pro2. The active-site Proton donor is the Glu3. The Proton donor; for beta-elimination activity role is filled by Lys58. Residues His91, Arg110, and Arg151 each coordinate DNA. The segment at 236–270 adopts an FPG-type zinc-finger fold; sequence FVYGRGGEFCKVCGSTLREIRLGQRASVYCPRCQR. Arg260 functions as the Proton donor; for delta-elimination activity in the catalytic mechanism.

The protein belongs to the FPG family. In terms of assembly, monomer. Requires Zn(2+) as cofactor.

The enzyme catalyses Hydrolysis of DNA containing ring-opened 7-methylguanine residues, releasing 2,6-diamino-4-hydroxy-5-(N-methyl)formamidopyrimidine.. It carries out the reaction 2'-deoxyribonucleotide-(2'-deoxyribose 5'-phosphate)-2'-deoxyribonucleotide-DNA = a 3'-end 2'-deoxyribonucleotide-(2,3-dehydro-2,3-deoxyribose 5'-phosphate)-DNA + a 5'-end 5'-phospho-2'-deoxyribonucleoside-DNA + H(+). Functionally, involved in base excision repair of DNA damaged by oxidation or by mutagenic agents. Acts as a DNA glycosylase that recognizes and removes damaged bases. Has a preference for oxidized purines, such as 7,8-dihydro-8-oxoguanine (8-oxoG). Has AP (apurinic/apyrimidinic) lyase activity and introduces nicks in the DNA strand. Cleaves the DNA backbone by beta-delta elimination to generate a single-strand break at the site of the removed base with both 3'- and 5'-phosphates. The chain is Formamidopyrimidine-DNA glycosylase from Pseudomonas aeruginosa (strain LESB58).